We begin with the raw amino-acid sequence, 270 residues long: Aliphatic sulfonates import ATP-binding protein SsuB (270 aa).

The ABC transporter domain maps to 17 to 238 (LAANDLRRTF…VRGSHRLAAL (222 aa)). 49–56 (GRSGCGKS) serves as a coordination point for ATP. The segment at 250-270 (PGTPPEPEPVAPLPTHLRWAH) is disordered. Positions 251–261 (GTPPEPEPVAP) are enriched in pro residues.

The protein belongs to the ABC transporter superfamily. Aliphatic sulfonates importer (TC 3.A.1.17.2) family. The complex is composed of two ATP-binding proteins (SsuB), two transmembrane proteins (SsuC) and a solute-binding protein (SsuA).

The protein localises to the cell inner membrane. The enzyme catalyses ATP + H2O + aliphatic sulfonate-[sulfonate-binding protein]Side 1 = ADP + phosphate + aliphatic sulfonateSide 2 + [sulfonate-binding protein]Side 1.. Its function is as follows. Part of the ABC transporter complex SsuABC involved in aliphatic sulfonates import. Responsible for energy coupling to the transport system. This is Aliphatic sulfonates import ATP-binding protein SsuB from Pseudomonas entomophila (strain L48).